The following is a 150-amino-acid chain: MSVALSNRFQGGKAFGLLKARQEKRLEEINREFLCDQKYSDEENLPEKLAAFKEKYMEFDLNNEGEIDLMSLKRMMEKLGVPKTHLEMKKMISEVTGGVSDTISYRDFVNMMLGKRSAVLKLVMMFEGKANESSPKPAGPPPERDIASLP.

S2 carries the N-acetylserine modification. Position 2 is a phosphoserine (S2). Positions E47–P82 constitute an EF-hand 1 domain. The Ca(2+) site is built by D60, N62, E64, and E66. The region spanning K83 to S117 is the EF-hand 2; degenerate domain. Residues K129–P150 form a disordered region. Position 134 is a phosphoserine (S134).

In terms of assembly, homodimer (Potential). Monomer.

The protein resides in the cytoplasm. The protein localises to the cytoskeleton. It is found in the cell projection. It localises to the ruffle membrane. Actin-binding protein that promotes actin bundling. May neither bind calcium nor depend on calcium for function. This chain is Allograft inflammatory factor 1-like (Aif1l), found in Mus musculus (Mouse).